The primary structure comprises 576 residues: F-actin capping regulator BSP1 (576 aa).

Residues Arg-24 to Arg-50 are disordered. Ser-46, Ser-79, and Ser-88 each carry phosphoserine. 2 disordered regions span residues Asn-132–Lys-160 and Gly-173–Pro-316. Residue Ser-185 is modified to Phosphoserine. The segment covering Thr-191 to Pro-206 has biased composition (basic and acidic residues). Ser-220 is modified (phosphoserine). 2 stretches are compositionally biased toward polar residues: residues Ser-243 to Leu-255 and Lys-264 to Ser-279. Over residues Lys-304 to Lys-313 the composition is skewed to pro residues. 2 positions are modified to phosphoserine: Ser-309 and Ser-320. Residues Ser-408–Arg-470 form an interaction with F-actin region. Residues Asp-541 to Val-576 form a disordered region. Basic and acidic residues predominate over residues Thr-544–Pro-556. The interval Arg-547–Val-576 is interaction with the F-actin capping complex. Basic residues predominate over residues Asn-561–Val-576.

As to quaternary structure, interacts (via C-terminus) with the CAP1-CAP2 F-actin capping protein complex. Interacts with INP52 (via SAC domain); the interaction is direct. Interacts with INP53 (via SAC domain); the interaction is direct. Interacts with RVS167. Interacts with SLA1. In terms of processing, phosphorylated by CDC28.

It is found in the cytoplasm. It localises to the cytoskeleton. The protein localises to the actin patch. The protein resides in the cell membrane. Its function is as follows. Recruits the capping protein complex to actin patches and the actomyosin contractile ring, and/or stabilizes their interaction. May serve as an adapter to link INP52 and INP53 to the cortical actin cytoskeleton. Binds F-actin. This is F-actin capping regulator BSP1 (BSP1) from Saccharomyces cerevisiae (strain ATCC 204508 / S288c) (Baker's yeast).